The chain runs to 329 residues: Beta-ketoacyl-[acyl-carrier-protein] synthase III (329 aa).

Residues cysteine 113 and histidine 255 contribute to the active site. The tract at residues 256-260 is ACP-binding; sequence QANQR. The active site involves asparagine 285.

It belongs to the thiolase-like superfamily. FabH family. In terms of assembly, homodimer.

The protein localises to the cytoplasm. It carries out the reaction malonyl-[ACP] + acetyl-CoA + H(+) = 3-oxobutanoyl-[ACP] + CO2 + CoA. The protein operates within lipid metabolism; fatty acid biosynthesis. Catalyzes the condensation reaction of fatty acid synthesis by the addition to an acyl acceptor of two carbons from malonyl-ACP. Catalyzes the first condensation reaction which initiates fatty acid synthesis and may therefore play a role in governing the total rate of fatty acid production. Possesses both acetoacetyl-ACP synthase and acetyl transacylase activities. Its substrate specificity determines the biosynthesis of branched-chain and/or straight-chain of fatty acids. This Chlorobium phaeobacteroides (strain DSM 266 / SMG 266 / 2430) protein is Beta-ketoacyl-[acyl-carrier-protein] synthase III.